A 505-amino-acid chain; its full sequence is MTDAVQNETVQEENKLIAERRAKLDEIRKSCKANGHPNDFRRDALAGDLQKEFGEKTKEELEELNHVVAIAGRIMAKRGPFLVIQETSGRIQAYADKEVQKELKEKYQGLDIGDIIGVKGALHKSGKGDLYVNMEEYELLTKALRPLPEKFHGLTDQEMRYRQRYVDLIVNEDSRNAFVVRSKVMSAIRNFMISKQFMEVETPMMHVIPGGASARPFITHHNALDMPMYLRIAPELYLKRLVVGGFDRVFEINRNFRNEGLSPRHNPEFTMMEFYMAYADYKDLMDFTEELLSSVALEVLGSTSMPYGEDTVEFGGKYARMSMFEAIKHYNPDHAQIQALTEEDLQNRELMVSIAKSVHVEVEPFWTCGQLLEEIFGETAEPKLMQPTFITGYPADISPLARRSDDNPFFTDRFEFFIGGREVANGFSELNDAEDQDARFKAQVEAKESGDDEAMFYDADYITALEHGLPPTAGQGIGIDRLVMLLTNTHTIRDVILFPAMRPQA.

Mg(2+) contacts are provided by Glu415 and Glu422.

This sequence belongs to the class-II aminoacyl-tRNA synthetase family. Homodimer. It depends on Mg(2+) as a cofactor.

The protein localises to the cytoplasm. It carries out the reaction tRNA(Lys) + L-lysine + ATP = L-lysyl-tRNA(Lys) + AMP + diphosphate. In Vibrio parahaemolyticus serotype O3:K6 (strain RIMD 2210633), this protein is Lysine--tRNA ligase.